We begin with the raw amino-acid sequence, 405 residues long: Serpin I2 (405 aa).

The first 18 residues, 1 to 18 (MDTIFLWSLLLLFFGSQA), serve as a signal peptide directing secretion. Asparagine 202, asparagine 207, and asparagine 306 each carry an N-linked (GlcNAc...) asparagine glycan.

The protein belongs to the serpin family. In terms of tissue distribution, expressed in pancreas and adipose tissues.

It is found in the secreted. The polypeptide is Serpin I2 (SERPINI2) (Homo sapiens (Human)).